The primary structure comprises 239 residues: Methylthioribulose-1-phosphate dehydratase (239 aa).

Cys94 lines the substrate pocket. Zn(2+) is bound by residues His112 and His114. Glu136 serves as the catalytic Proton donor/acceptor. His192 contributes to the Zn(2+) binding site.

This sequence belongs to the aldolase class II family. MtnB subfamily. The cofactor is Zn(2+).

The protein localises to the cytoplasm. It catalyses the reaction 5-(methylsulfanyl)-D-ribulose 1-phosphate = 5-methylsulfanyl-2,3-dioxopentyl phosphate + H2O. The protein operates within amino-acid biosynthesis; L-methionine biosynthesis via salvage pathway; L-methionine from S-methyl-5-thio-alpha-D-ribose 1-phosphate: step 2/6. Its function is as follows. Catalyzes the dehydration of methylthioribulose-1-phosphate (MTRu-1-P) into 2,3-diketo-5-methylthiopentyl-1-phosphate (DK-MTP-1-P). Functions in the methionine salvage pathway. May play a role in apoptosis. The polypeptide is Methylthioribulose-1-phosphate dehydratase (Xenopus tropicalis (Western clawed frog)).